The sequence spans 107 residues: Large ribosomal subunit protein uL24 (107 aa).

The protein belongs to the universal ribosomal protein uL24 family. In terms of assembly, part of the 50S ribosomal subunit.

Functionally, one of two assembly initiator proteins, it binds directly to the 5'-end of the 23S rRNA, where it nucleates assembly of the 50S subunit. In terms of biological role, one of the proteins that surrounds the polypeptide exit tunnel on the outside of the subunit. The chain is Large ribosomal subunit protein uL24 from Pelotomaculum thermopropionicum (strain DSM 13744 / JCM 10971 / SI).